A 537-amino-acid polypeptide reads, in one-letter code: Glucan 1,6-alpha-glucosidase (537 aa).

Residue D194 is the Nucleophile of the active site. E236 acts as the Proton donor in catalysis.

It belongs to the glycosyl hydrolase 13 family.

It is found in the cytoplasm. The catalysed reaction is Hydrolysis of (1-&gt;6)-alpha-D-glucosidic linkages in (1-&gt;6)-alpha-D-glucans and derived oligosaccharides.. Functionally, the physiological substrates may be short isomaltosaccharides. The chain is Glucan 1,6-alpha-glucosidase (dexB) from Streptococcus dysgalactiae subsp. equisimilis (Streptococcus equisimilis).